Consider the following 261-residue polypeptide: Gap junction beta-6 protein (261 aa).

The Cytoplasmic segment spans residues 1–22 (MDWGTLHTFIGGVNKHSTSIGK). A helical transmembrane segment spans residues 23–45 (VWITVIFIFRVMILVVAAQEVWG). Topologically, residues 46–75 (DEQEDFVCNTLQPGCKNVCYDHFFPVSHIR) are extracellular. A helical membrane pass occupies residues 76–98 (LWALQLIFVSTPALLVAMHVAYY). Over 99 to 131 (RHETTRKFRRGEKRNDFKDIEDIKKQKVRIEGS) the chain is Cytoplasmic. The helical transmembrane segment at 132 to 154 (LWWTYTSSIFFRIIFEAAFMYVF) threads the bilayer. Topologically, residues 155–192 (YFLYNGYHLPWVLKCGIDPCPNLVDCFISRPTEKTVFT) are extracellular. Residues 193–215 (IFMISASVICMLLNVAELCYLLL) traverse the membrane as a helical segment. The Cytoplasmic segment spans residues 216 to 261 (KVCFRRSKRAQTQKNHPNHALKESKQNEMNELISDSGQNAITGFPS).

Belongs to the connexin family. Beta-type (group I) subfamily. A connexon is composed of a hexamer of connexins. Interacts with CNST.

Its subcellular location is the cell membrane. The protein localises to the cell junction. It localises to the gap junction. In terms of biological role, one gap junction consists of a cluster of closely packed pairs of transmembrane channels, the connexons, through which materials of low MW diffuse from one cell to a neighboring cell. The polypeptide is Gap junction beta-6 protein (GJB6) (Homo sapiens (Human)).